Reading from the N-terminus, the 483-residue chain is GDP-fucose protein O-fucosyltransferase 4 (483 aa).

M1 is a topological domain (cytoplasmic). The chain crosses the membrane as a helical; Signal-anchor for type II membrane protein span at residues 2-21 (ALCLWLFLVLPICCWCQGAV). Over 22 to 483 (DLGDSGVFQP…RARGLSNDSR (462 aa)) the chain is Lumenal. N-linked (GlcNAc...) asparagine glycosylation is found at N151 and N303. Residues C374 and C377 are joined by a disulfide bond. The disordered stretch occupies residues 387 to 425 (RKAHRKNPKQNQPPQPKMANSSHMGCPLPSPGYGPVENV). N-linked (GlcNAc...) asparagine glycosylation is found at N406, N428, N456, and N480.

This sequence belongs to the glycosyltransferase 10 family.

Its subcellular location is the endoplasmic reticulum membrane. It carries out the reaction L-threonyl-[protein] + GDP-beta-L-fucose = 3-O-(alpha-L-fucosyl)-L-threonyl-[protein] + GDP + H(+). The catalysed reaction is L-seryl-[protein] + GDP-beta-L-fucose = 3-O-(alpha-L-fucosyl)-L-seryl-[protein] + GDP + H(+). Its pathway is protein modification; protein glycosylation. Functionally, protein O-fucosyltransferase that specifically catalyzes O-fucosylation of serine or threonine residues in EMI domains of target proteins. Attaches fucose through an O-glycosidic linkage. O-fucosylation of EMI domain-containing proteins may be required for facilitating protein folding and secretion. The protein is GDP-fucose protein O-fucosyltransferase 4 (fut11) of Danio rerio (Zebrafish).